The sequence spans 244 residues: Leucyl/phenylalanyl-tRNA--protein transferase (244 aa).

Belongs to the L/F-transferase family.

The protein resides in the cytoplasm. The enzyme catalyses N-terminal L-lysyl-[protein] + L-leucyl-tRNA(Leu) = N-terminal L-leucyl-L-lysyl-[protein] + tRNA(Leu) + H(+). The catalysed reaction is N-terminal L-arginyl-[protein] + L-leucyl-tRNA(Leu) = N-terminal L-leucyl-L-arginyl-[protein] + tRNA(Leu) + H(+). It catalyses the reaction L-phenylalanyl-tRNA(Phe) + an N-terminal L-alpha-aminoacyl-[protein] = an N-terminal L-phenylalanyl-L-alpha-aminoacyl-[protein] + tRNA(Phe). In terms of biological role, functions in the N-end rule pathway of protein degradation where it conjugates Leu, Phe and, less efficiently, Met from aminoacyl-tRNAs to the N-termini of proteins containing an N-terminal arginine or lysine. The protein is Leucyl/phenylalanyl-tRNA--protein transferase of Janthinobacterium sp. (strain Marseille) (Minibacterium massiliensis).